The primary structure comprises 264 residues: Acyl-[acyl-carrier-protein]--UDP-N-acetylglucosamine O-acyltransferase (264 aa).

The protein belongs to the transferase hexapeptide repeat family. LpxA subfamily. Homotrimer.

The protein localises to the cytoplasm. It carries out the reaction a (3R)-hydroxyacyl-[ACP] + UDP-N-acetyl-alpha-D-glucosamine = a UDP-3-O-[(3R)-3-hydroxyacyl]-N-acetyl-alpha-D-glucosamine + holo-[ACP]. It functions in the pathway glycolipid biosynthesis; lipid IV(A) biosynthesis; lipid IV(A) from (3R)-3-hydroxytetradecanoyl-[acyl-carrier-protein] and UDP-N-acetyl-alpha-D-glucosamine: step 1/6. Functionally, involved in the biosynthesis of lipid A, a phosphorylated glycolipid that anchors the lipopolysaccharide to the outer membrane of the cell. This chain is Acyl-[acyl-carrier-protein]--UDP-N-acetylglucosamine O-acyltransferase, found in Rickettsia peacockii (strain Rustic).